A 625-amino-acid chain; its full sequence is 1-deoxy-D-xylulose-5-phosphate synthase (625 aa).

Thiamine diphosphate is bound by residues His-74 and Gly-115 to Ser-117. Position 146 (Asp-146) interacts with Mg(2+). Thiamine diphosphate-binding positions include Gly-147–Ala-148, Asn-175, Tyr-286, and Glu-367. Asn-175 serves as a coordination point for Mg(2+).

The protein belongs to the transketolase family. DXPS subfamily. Homodimer. Mg(2+) serves as cofactor. The cofactor is thiamine diphosphate.

It carries out the reaction D-glyceraldehyde 3-phosphate + pyruvate + H(+) = 1-deoxy-D-xylulose 5-phosphate + CO2. The protein operates within metabolic intermediate biosynthesis; 1-deoxy-D-xylulose 5-phosphate biosynthesis; 1-deoxy-D-xylulose 5-phosphate from D-glyceraldehyde 3-phosphate and pyruvate: step 1/1. Catalyzes the acyloin condensation reaction between C atoms 2 and 3 of pyruvate and glyceraldehyde 3-phosphate to yield 1-deoxy-D-xylulose-5-phosphate (DXP). The protein is 1-deoxy-D-xylulose-5-phosphate synthase of Lachnoclostridium phytofermentans (strain ATCC 700394 / DSM 18823 / ISDg) (Clostridium phytofermentans).